We begin with the raw amino-acid sequence, 594 residues long: MSNELDYRPVMLLQNDINLKYSSPNDDEAWSKYLENPMTAATKAMMRANGDDDGVAALSLLYDYYRVPKEKRIITQGSTGRCDQVKRSCIEYDSDISTYDSTQLMRFLNDNNSSTHEYSETHKKNSYLSLDCLINPSKLPLSSGKLDNNAHDDFMATSCDVYEKNPLTTLFDPIHVPPPQQRWQPDSTFKEDTPEPLIFNDILRSQAESTCSEDYIPGEANRDFECTLESPKAIHIKSGESPMAYLNKGQFYPVNLRTAETRKCVHLTSNKVKSVVMVVFDNEKNPEEQLKRWKHWHSRQPTAKQRVIDVADYKENCNTVENIEEVAYNALSFVWNINEEAKIFIGINCLSTDFSSQKGVKGVPLNLQIDTYDFETGVKRLIHRAVCQIKIFCDKGAERKMRDEERKQFRRKGKSADQNNKDIKASVLPGYRGSDFTYLRPVTDMETHPVLFIPNIHYSNLQRCGVVLQSAADNSDRLSLKRSSQSFPESFEAPPSKQQTNEDPQRVLLYVRRETEEVFDALMLKTPDLKGLRNAISEKYELPEERICRVYKKCKRGILVNMDNNIIQHYSNHVAFLLDLTDVDGKIQVTLKEL.

Transcription activation stretches follow at residues 25–75 (NDDE…RIIT) and 28–91 (EAWS…SCIE). A Grh/CP2 DB domain is found at 220–453 (ANRDFECTLE…DMETHPVLFI (234 aa)). Positions 483 to 503 (SSQSFPESFEAPPSKQQTNED) are disordered.

The protein belongs to the grh/CP2 family. Grainyhead subfamily.

Its subcellular location is the nucleus. In terms of biological role, transcription factor playing important roles in primary neurulation and in the differentiation of stratified epithelia of both ectodermal and endodermal origin. Binds directly to the consensus DNA sequence 5'-AACCGGTT-3' acting as an activator and repressor on distinct target genes. This Xenopus tropicalis (Western clawed frog) protein is Grainyhead-like protein 3 homolog (grhl3).